Reading from the N-terminus, the 371-residue chain is Jasmonate-induced oxygenase 2 (371 aa).

Positions 219–320 (NIGACLRVNY…RVSLAFFYNP (102 aa)) constitute a Fe2OG dioxygenase domain. Jasmonate is bound at residue Arg-225. 2-oxoglutarate contacts are provided by Asn-227 and Tyr-229. Residues His-244, Asp-246, and His-301 each coordinate Fe cation. 2 residues coordinate 2-oxoglutarate: Arg-311 and Ser-313. Jasmonate is bound by residues Arg-350 and Arg-354.

This sequence belongs to the iron/ascorbate-dependent oxidoreductase family. The cofactor is L-ascorbate. Requires Fe(2+) as cofactor.

It carries out the reaction jasmonate + 2-oxoglutarate + O2 = (1R,2R)-12-hydroxyjasmonate + succinate + CO2. Its function is as follows. 2-oxoglutarate-dependent dioxygenase involved in the oxidation of jasmonate (JA), a stress-induced phytohormone synthesized in response to attack by pathogens and herbivores, which triggers the activation of defense responses via the JA-mediated signaling pathway. Converts JA to 12-hydroxyjasmonate (12OH-JA), an inactive form of JA. Is specific to free JA, and cannot oxidize the bioactive form jasmonoyl-L-isoleucine (JA-Ile) or other JA-amino acid conjugates. Prevents over-accumulation of JA and indirectly its bioactive form JA-Ile under stress response. Acts as a negative regulator of JA-mediated defense signaling, by contributing to 12OH-JA accumulation, which represses JA defense responses upon infection by the fungal pathogen Botrytis cinerea. Acts as a negative regulator of JA-mediated defense responses upon infestation by the herbivorous caterpillar Mamestra brassicae. May be involved in the catabolism of cytotoxic polycyclic aromatic hydrocarbons (PAHs). The sequence is that of Jasmonate-induced oxygenase 2 from Arabidopsis thaliana (Mouse-ear cress).